We begin with the raw amino-acid sequence, 250 residues long: Thioesterase FPSE_09186 (250 aa).

Belongs to the AMT4 thioesterase family.

It participates in secondary metabolite biosynthesis. In terms of biological role, thioesterase; part of the gene cluster that mediates the biosynthesis of the lipopeptides W493 A and B. W493 A and B consist of six amino acid residues D-allo-thr, L-Ala, D-Ala, L-Gln, D-Tyr, and L-Val/L-Ile linked to a 3-hydroxy-4-methyltetradecanoic acid polyketide chain. The biosynthesis starts with formation of the linear polyketide chain by the highly reducing polyketide synthase PKS40. The gene cluster contains a putative acyl-CoA ligase (FPSE_09184) for formation of a CoA thioester polyketide. The thiol bond could be hydrolyzed by the putative thioesterase (FPSE_09186) and then accepted by the first T domain in module 1 of NRPS32. The second T domain is responsible for accepting a threonine, which is adenylated by the A domain and epimerized to the D-allo-threonine formed by the E domain. The five successive modules incorporate Ala, Ala, Gln, Tyr, and Val/Ile into the final product, which is released by cyclization. This chain is Thioesterase FPSE_09186, found in Fusarium pseudograminearum (strain CS3096) (Wheat and barley crown-rot fungus).